The sequence spans 311 residues: 1,4-dihydroxy-2-naphthoate octaprenyltransferase (311 aa).

9 helical membrane passes run 31-51 (LTAS…YVKV), 53-73 (LLLF…TNLF), 104-126 (TILQ…ICAS), 131-153 (LALI…LPIA), 157-177 (FGEL…SFFI), 182-202 (INMQ…AINL), 220-240 (LAIL…FAVA), 242-262 (IWVV…VVFL), and 290-310 (TAQT…ISYF).

This sequence belongs to the MenA family. Type 1 subfamily.

It localises to the cell membrane. The catalysed reaction is an all-trans-polyprenyl diphosphate + 1,4-dihydroxy-2-naphthoate + H(+) = a 2-demethylmenaquinol + CO2 + diphosphate. It functions in the pathway quinol/quinone metabolism; menaquinone biosynthesis; menaquinol from 1,4-dihydroxy-2-naphthoate: step 1/2. Conversion of 1,4-dihydroxy-2-naphthoate (DHNA) to demethylmenaquinone (DMK). The sequence is that of 1,4-dihydroxy-2-naphthoate octaprenyltransferase from Bacillus subtilis (strain 168).